We begin with the raw amino-acid sequence, 708 residues long: MGLTAYGNRRVQPGELPFGANLTLIHTRAQPVICSKLLLTKRVSPISFFLSKFQNSWGEDGWVQLDQLPSPNAVSSDQVHCSAGCTHRKCGWAASKSKEKVPARPHGVCDGVCTDYSQCTQPCPPDTQGNMGFSCRQKTWHKITDTCQTLNALNIFEEDSRLVQPFEDNIKISVYTGKSETITDMLLQKCPTDLSCVIRNIQQSPWIPGNIAVIVQLLHNISTAIWTGVDEAKMQSYSTIANHILNSKSISNWTFIPDRNSSYILLHSVNSFARRLFIDKHPVDISDVFIHTMGTTISGDNIGKNFTFSMRINDTSNEVTGRVLISRDELRKVPSPSQVISIAFPTIGAILEASLLENVTVNGLVLSAILPKELKRISLIFEKISKSEERRTQCVGWHSVENRWDQQACKMIQENSQQAVCKCRPSKLFTSFSILMSPHILESLILTYITYVGLGISICSLILCLSIEVLVWSQVTKTEITYLRHVCIVNIAATLLMADVWFIVASFLSGPITHHKGCVAATFFVHFFYLSVFFWMLAKALLILYGIMIVFHTLPKSVLVASLFSVGYGCPLAIAAITVAATEPGKGYLRPEICWLNWDMTKALLAFVIPALAIVVVNLITVTLVIVKTQRAAIGNSMFQEVRAIVRISKNIAILTPLLGLTWGFGVATVIDDRSLAFHIIFSLLNAFQVSPDASDQVQSERIHEDVL.

Residues 1–451 are Extracellular-facing; sequence MGLTAYGNRR…ESLILTYITY (451 aa). 7 N-linked (GlcNAc...) asparagine glycosylation sites follow: N21, N220, N252, N260, N305, N313, and N358. The region spanning 293-442 is the GAIN-B domain; sequence MGTTISGDNI…SILMSPHILE (150 aa). Disulfide bonds link C394–C421 and C409–C423. The GPS stretch occupies residues 394–442; sequence CVGWHSVENRWDQQACKMIQENSQQAVCKCRPSKLFTSFSILMSPHILE. A helical membrane pass occupies residues 452–472; it reads VGLGISICSLILCLSIEVLVW. Over 473-487 the chain is Cytoplasmic; the sequence is SQVTKTEITYLRHVC. A helical membrane pass occupies residues 488–508; it reads IVNIAATLLMADVWFIVASFL. The Extracellular segment spans residues 509–530; the sequence is SGPITHHKGCVAATFFVHFFYL. The helical transmembrane segment at 531–551 threads the bilayer; it reads SVFFWMLAKALLILYGIMIVF. Over 552–557 the chain is Cytoplasmic; that stretch reads HTLPKS. The helical transmembrane segment at 558-578 threads the bilayer; it reads VLVASLFSVGYGCPLAIAAIT. Residues 579 to 606 lie on the Extracellular side of the membrane; the sequence is VAATEPGKGYLRPEICWLNWDMTKALLA. Residues 607–627 traverse the membrane as a helical segment; the sequence is FVIPALAIVVVNLITVTLVIV. At 628-650 the chain is on the cytoplasmic side; the sequence is KTQRAAIGNSMFQEVRAIVRISK. Residues 651-671 traverse the membrane as a helical segment; the sequence is NIAILTPLLGLTWGFGVATVI. Topologically, residues 672 to 674 are extracellular; sequence DDR. A helical membrane pass occupies residues 675-695; it reads SLAFHIIFSLLNAFQVSPDAS. The Cytoplasmic portion of the chain corresponds to 696-708; sequence DQVQSERIHEDVL.

It belongs to the G-protein coupled receptor 2 family. Adhesion G-protein coupled receptor (ADGR) subfamily. As to expression, high expression in kidney. Up-regulated in lung adenocarcinomas and prostate cancers.

Its subcellular location is the membrane. In terms of biological role, orphan receptor. This Homo sapiens (Human) protein is Putative adhesion G protein-coupled receptor F2P.